The following is a 1349-amino-acid chain: Protein strawberry notch homolog 2 (1349 aa).

3 disordered regions span residues Tyr-170 to Asp-212, Ser-609 to Ser-633, and Pro-1319 to Ser-1349. Over residues Glu-177 to Glu-188 the composition is skewed to acidic residues. The segment covering Ser-609–Lys-631 has biased composition (basic residues).

This sequence belongs to the SBNO family. In terms of assembly, interacts with TAL1; this interaction inhibits TAL1 occupancy of the DCSTAMP promoter, leading to the activation of the DCSTAMP promoter by the transcription factor MITF. Expressed in the spleen and bone marrow, and to a lesser extent in the kidney, liver, brain, skin, heart and muscle. Expressed predominantly in osteoclasts, and to a lesser extent in T-cells, B-cells and osteoblasts. Expressed in macrophages.

Acts as a transcriptional coregulator, that can have both coactivator and corepressor functions. Inhibits the DCSTAMP-repressive activity of TAL1, hence enhancing the access of the transcription factor MITF to the DC-STAMP promoter in osteoclast. Plays a role in bone homeostasis; required as a positive regulator in TNFSF11//RANKL-mediated osteoclast fusion via a DCSTAMP-dependent pathway. May also be required in the regulation of osteoblast differentiation. Involved in the transcriptional corepression of NF-kappaB in macrophages. Plays a role as a regulator in the pro-inflammatory cascade. In Mus musculus (Mouse), this protein is Protein strawberry notch homolog 2 (Sbno2).